The primary structure comprises 90 residues: Large ribosomal subunit protein bL27 (90 aa).

Positions 1-22 (MAHKKAGGSTRNGRDSNPKMLG) are disordered.

It belongs to the bacterial ribosomal protein bL27 family.

This is Large ribosomal subunit protein bL27 from Coxiella burnetii (strain CbuK_Q154) (Coxiella burnetii (strain Q154)).